Here is a 367-residue protein sequence, read N- to C-terminus: DNA replication and repair protein RecF (367 aa).

30–37 (GNNAQGKT) lines the ATP pocket.

This sequence belongs to the RecF family.

The protein resides in the cytoplasm. Functionally, the RecF protein is involved in DNA metabolism; it is required for DNA replication and normal SOS inducibility. RecF binds preferentially to single-stranded, linear DNA. It also seems to bind ATP. In Clostridium tetani (strain Massachusetts / E88), this protein is DNA replication and repair protein RecF.